Reading from the N-terminus, the 680-residue chain is Methionine--tRNA ligase (680 aa).

The 'HIGH' region signature appears at 14 to 24 (PYANGPIHLGH). Zn(2+) is bound by residues Cys-145, Cys-148, Cys-158, and Cys-161. Positions 330-334 (KMSKS) match the 'KMSKS' region motif. Lys-333 lines the ATP pocket. Positions 579–680 (DFAKVDFRIA…DGAQPGMRVK (102 aa)) constitute a tRNA-binding domain.

This sequence belongs to the class-I aminoacyl-tRNA synthetase family. MetG type 1 subfamily. As to quaternary structure, homodimer. Zn(2+) is required as a cofactor.

The protein localises to the cytoplasm. The catalysed reaction is tRNA(Met) + L-methionine + ATP = L-methionyl-tRNA(Met) + AMP + diphosphate. Functionally, is required not only for elongation of protein synthesis but also for the initiation of all mRNA translation through initiator tRNA(fMet) aminoacylation. This is Methionine--tRNA ligase from Hydrogenovibrio crunogenus (strain DSM 25203 / XCL-2) (Thiomicrospira crunogena).